The chain runs to 243 residues: tRNA (guanine-N(1)-)-methyltransferase (243 aa).

Residues glycine 113 and 133 to 138 each bind S-adenosyl-L-methionine; that span reads IGDFVL.

It belongs to the RNA methyltransferase TrmD family. In terms of assembly, homodimer.

It localises to the cytoplasm. The enzyme catalyses guanosine(37) in tRNA + S-adenosyl-L-methionine = N(1)-methylguanosine(37) in tRNA + S-adenosyl-L-homocysteine + H(+). Its function is as follows. Specifically methylates guanosine-37 in various tRNAs. The sequence is that of tRNA (guanine-N(1)-)-methyltransferase from Bacillus licheniformis (strain ATCC 14580 / DSM 13 / JCM 2505 / CCUG 7422 / NBRC 12200 / NCIMB 9375 / NCTC 10341 / NRRL NRS-1264 / Gibson 46).